The following is a 421-amino-acid chain: ATP-dependent RNA helicase eIF4A (421 aa).

Residues 1–26 are disordered; sequence MSNDKGLEEIPEDQSTTPHKPTSNVG. Residues 13–26 are compositionally biased toward polar residues; that stretch reads DQSTTPHKPTSNVG. The Q motif signature appears at 48–76; it reads DSFDAMELKPELLRGVYAYGFERPSAIQQ. The Helicase ATP-binding domain maps to 79–249; sequence IKPIIKGSDV…TKFMRDPVRI (171 aa). 92-99 is an ATP binding site; that stretch reads AQSGTGKT. The short motif at 197–200 is the DEAD box element; the sequence is DEAD. The Helicase C-terminal domain maps to 260 to 421; that stretch reads GIKQFYIAVE…EMPMNVADLI (162 aa).

It belongs to the DEAD box helicase family. eIF4A subfamily. As to quaternary structure, component of the eIF4F complex, which composition varies with external and internal environmental conditions. It is composed of at least eIF4A, eIF4E and eIF4G.

The protein localises to the cytoplasm. It carries out the reaction ATP + H2O = ADP + phosphate + H(+). In terms of biological role, ATP-dependent RNA helicase which is a subunit of the eIF4F complex involved in cap recognition and is required for mRNA binding to ribosome. In the current model of translation initiation, eIF4A unwinds RNA secondary structures in the 5'-UTR of mRNAs which is necessary to allow efficient binding of the small ribosomal subunit, and subsequent scanning for the initiator codon. In Aspergillus oryzae (strain ATCC 42149 / RIB 40) (Yellow koji mold), this protein is ATP-dependent RNA helicase eIF4A (tif1).